The sequence spans 124 residues: Replication restart protein PriB (124 aa).

Positions isoleucine 12–aspartate 112 constitute an SSB domain.

This sequence belongs to the PriB family. As to quaternary structure, homodimer. Interacts with PriA and DnaT. Component of the replication restart primosome. Primosome assembly occurs via a 'hand-off' mechanism. PriA binds to replication forks, subsequently PriB then DnaT bind; DnaT then displaces ssDNA to generate the helicase loading substrate.

Involved in the restart of stalled replication forks, which reloads the replicative helicase on sites other than the origin of replication; the PriA-PriB pathway is the major replication restart pathway. During primosome assembly it facilitates complex formation between PriA and DnaT on DNA; stabilizes PriA on DNA. Stimulates the DNA unwinding activity of PriA helicase. This Actinobacillus pleuropneumoniae serotype 5b (strain L20) protein is Replication restart protein PriB.